The primary structure comprises 128 residues: Small ribosomal subunit protein uS8c (128 aa).

This sequence belongs to the universal ribosomal protein uS8 family. In terms of assembly, part of the 30S ribosomal subunit.

It localises to the plastid. The protein localises to the chloroplast. In terms of biological role, one of the primary rRNA binding proteins, it binds directly to 16S rRNA central domain where it helps coordinate assembly of the platform of the 30S subunit. This Gnetum parvifolium (Small-leaved jointfir) protein is Small ribosomal subunit protein uS8c (rps8).